We begin with the raw amino-acid sequence, 432 residues long: MNYNANVVKFHSTILHKFALKISKFLILCMRRNKRQLACMKCQCENPMAAITYADIEYPHNTHFLLLDSISWIPCTCKILKLKEFELPDRFDIPNLFYDGWLSYVFHTFSGVYLKIGYEMDESGFCLPDQVYHLIDNHSCIQTAVSHLLRNHQALFKYLCDYLRSGEFPLTVLIHHVMLYQYYPKSLQEALWAAVEHYVNNSGEAYSTVQKLAVQKKIGNIRMYLVNPRDIFALGSTCNCIVVSSSNFQSYVQLRKPLLENNLPYEIDGFDKILQCANSEADIGWIAMIHCIGSNGYAFPIHLYLNMKKNIFLGKLPESTLLLYNSDGAIFKNPPSSKKECDFYNQLLLDLCKCRQFNAEMECNMKKLFNNPTGLHSLPNLPNFSEAGSAKSSNFCSSKDNCLTNRLTLNCLDTPSDENGEDIAIQLIIPAE.

This sequence belongs to the UPF0300 family.

It localises to the cytoplasm. The protein resides in the cell cortex. In terms of biological role, has a role in meiosis. In Schizosaccharomyces pombe (strain 972 / ATCC 24843) (Fission yeast), this protein is Meiotically up-regulated gene 134 protein (mug134).